Here is a 318-residue protein sequence, read N- to C-terminus: Biotin synthase (318 aa).

A Radical SAM core domain is found at 44-273 (LCGNKFDLCT…TVQIRLAGGR (230 aa)). [4Fe-4S] cluster contacts are provided by Cys62, Cys66, and Cys69. [2Fe-2S] cluster is bound by residues Ser106, Cys138, Cys198, and Arg268.

The protein belongs to the radical SAM superfamily. Biotin synthase family. In terms of assembly, homodimer. [4Fe-4S] cluster is required as a cofactor. [2Fe-2S] cluster serves as cofactor.

The catalysed reaction is (4R,5S)-dethiobiotin + (sulfur carrier)-SH + 2 reduced [2Fe-2S]-[ferredoxin] + 2 S-adenosyl-L-methionine = (sulfur carrier)-H + biotin + 2 5'-deoxyadenosine + 2 L-methionine + 2 oxidized [2Fe-2S]-[ferredoxin]. The protein operates within cofactor biosynthesis; biotin biosynthesis; biotin from 7,8-diaminononanoate: step 2/2. Catalyzes the conversion of dethiobiotin (DTB) to biotin by the insertion of a sulfur atom into dethiobiotin via a radical-based mechanism. This chain is Biotin synthase, found in Clostridium botulinum (strain Langeland / NCTC 10281 / Type F).